Here is a 327-residue protein sequence, read N- to C-terminus: Chain length determinant protein (327 aa).

Topologically, residues 1-31 (MTVDSNTSSGRGNDPEQIDLIELLLQLWRGK) are cytoplasmic. Residues 32–52 (MTIIVAVIIAILLAVGYLMIA) form a helical membrane-spanning segment. Topologically, residues 53 to 294 (KEKWTSTAII…LPVRRDSPKT (242 aa)) are periplasmic. Residues 295–315 (AITLVLAVLLGGMIGAGIVLG) form a helical membrane-spanning segment. The Cytoplasmic segment spans residues 316–327 (RNALRSYKPKAL).

Belongs to the WzzB/Cld/Rol family.

The protein localises to the cell inner membrane. Its pathway is bacterial outer membrane biogenesis; lipopolysaccharide biosynthesis. In terms of biological role, confers a modal distribution of chain length on the O-antigen component of lipopolysaccharide (LPS). Gives rise to a reduced number of short chain molecules and increases in numbers of longer molecules, with a modal value of 20. The protein is Chain length determinant protein (wzzB) of Salmonella typhimurium (strain LT2 / SGSC1412 / ATCC 700720).